Reading from the N-terminus, the 251-residue chain is Ubiquinone/menaquinone biosynthesis C-methyltransferase UbiE (251 aa).

Residues Thr-74, Asp-95, 123 to 124, and Ser-140 each bind S-adenosyl-L-methionine; that span reads NA.

Belongs to the class I-like SAM-binding methyltransferase superfamily. MenG/UbiE family.

It catalyses the reaction a 2-demethylmenaquinol + S-adenosyl-L-methionine = a menaquinol + S-adenosyl-L-homocysteine + H(+). The enzyme catalyses a 2-methoxy-6-(all-trans-polyprenyl)benzene-1,4-diol + S-adenosyl-L-methionine = a 5-methoxy-2-methyl-3-(all-trans-polyprenyl)benzene-1,4-diol + S-adenosyl-L-homocysteine + H(+). It participates in quinol/quinone metabolism; menaquinone biosynthesis; menaquinol from 1,4-dihydroxy-2-naphthoate: step 2/2. The protein operates within cofactor biosynthesis; ubiquinone biosynthesis. In terms of biological role, methyltransferase required for the conversion of demethylmenaquinol (DMKH2) to menaquinol (MKH2) and the conversion of 2-polyprenyl-6-methoxy-1,4-benzoquinol (DDMQH2) to 2-polyprenyl-3-methyl-6-methoxy-1,4-benzoquinol (DMQH2). The chain is Ubiquinone/menaquinone biosynthesis C-methyltransferase UbiE from Proteus mirabilis (strain HI4320).